The following is a 53-amino-acid chain: ComX pheromone (53 aa).

The propeptide occupies 1 to 46 (MQEMVGYLIKYPNVLREVMEGNACLLGVDKDQSECIINGFKGLEIY). A lipid anchor (3'-geranyl-2',N2-cyclotryptophan) is attached at Trp-51.

Interacts directly with the sensor histidine kinase ComP and stimulates its activity. Trp-51 is modified by geranylation, which is essential for activity. Modified by the tryptophan prenyltransferase ComQ before export to the extracellular environment. The type of isoprenyl derivative differs among the different pherotypes and depends on ComX primary sequence.

Its subcellular location is the secreted. Its function is as follows. Part of a major quorum-sensing system that regulates the development of genetic competence. Acts through the activation of the two-component regulatory system ComP/ComA composed of a sensor histidine kinase, ComP, and a response regulator, ComA. This is ComX pheromone from Bacillus mojavensis.